A 335-amino-acid polypeptide reads, in one-letter code: N-acetyl-gamma-glutamyl-phosphate reductase (335 aa).

Cys147 is a catalytic residue.

Belongs to the NAGSA dehydrogenase family. Type 1 subfamily.

The protein localises to the cytoplasm. It catalyses the reaction N-acetyl-L-glutamate 5-semialdehyde + phosphate + NADP(+) = N-acetyl-L-glutamyl 5-phosphate + NADPH + H(+). Its pathway is amino-acid biosynthesis; L-arginine biosynthesis; N(2)-acetyl-L-ornithine from L-glutamate: step 3/4. Its function is as follows. Catalyzes the NADPH-dependent reduction of N-acetyl-5-glutamyl phosphate to yield N-acetyl-L-glutamate 5-semialdehyde. In Campylobacter hominis (strain ATCC BAA-381 / DSM 21671 / CCUG 45161 / LMG 19568 / NCTC 13146 / CH001A), this protein is N-acetyl-gamma-glutamyl-phosphate reductase.